Consider the following 492-residue polypeptide: Endoglucanase 15 (492 aa).

The first 30 residues, 1-30, serve as a signal peptide directing secretion; that stretch reads MSCISSQCFITIKSICIVLLLSITCGAVSA. D86 functions as the Nucleophile in the catalytic mechanism. Catalysis depends on residues H414, D466, and E475.

Belongs to the glycosyl hydrolase 9 (cellulase E) family.

It is found in the secreted. The catalysed reaction is Endohydrolysis of (1-&gt;4)-beta-D-glucosidic linkages in cellulose, lichenin and cereal beta-D-glucans.. This is Endoglucanase 15 from Arabidopsis thaliana (Mouse-ear cress).